The sequence spans 225 residues: Phosphoserine phosphatase (225 aa).

N-acetylmethionine is present on Met1. Asp20 acts as the Nucleophile in catalysis. Asp20 and Asp22 together coordinate Mg(2+). Residue 20-22 participates in L-serine binding; that stretch reads DVD. Asp22 acts as the Proton donor in catalysis. Met52 is a binding site for O-phospho-L-serine. Gly53 is a binding site for phosphate. L-serine is bound by residues 109 to 111 and Lys158; that span reads SGG. O-phospho-L-serine contacts are provided by residues 109–111 and Lys158; that span reads SGG. Asp179 lines the Mg(2+) pocket. Thr182 is an O-phospho-L-serine binding site. Thr182 is a phosphate binding site.

The protein belongs to the HAD-like hydrolase superfamily. SerB family. Homodimer. The cofactor is Mg(2+).

It is found in the cytoplasm. The protein localises to the cytosol. The catalysed reaction is O-phospho-L-serine + H2O = L-serine + phosphate. The enzyme catalyses O-phospho-D-serine + H2O = D-serine + phosphate. The protein operates within amino-acid biosynthesis; L-serine biosynthesis; L-serine from 3-phospho-D-glycerate: step 3/3. In terms of biological role, catalyzes the last irreversible step in the biosynthesis of L-serine from carbohydrates, the dephosphorylation of O-phospho-L-serine to L-serine. L-serine can then be used in protein synthesis, to produce other amino acids, in nucleotide metabolism or in glutathione synthesis, or can be racemized to D-serine, a neuromodulator. May also act on O-phospho-D-serine. This chain is Phosphoserine phosphatase, found in Rattus norvegicus (Rat).